The chain runs to 361 residues: Phosphoserine aminotransferase (361 aa).

Arg42 is a binding site for L-glutamate. Pyridoxal 5'-phosphate is bound by residues 76–77 (AR), Trp102, Thr153, Asp173, and Gln196. Lys197 is subject to N6-(pyridoxal phosphate)lysine. 238–239 (NT) serves as a coordination point for pyridoxal 5'-phosphate.

This sequence belongs to the class-V pyridoxal-phosphate-dependent aminotransferase family. SerC subfamily. As to quaternary structure, homodimer. It depends on pyridoxal 5'-phosphate as a cofactor.

It is found in the cytoplasm. The catalysed reaction is O-phospho-L-serine + 2-oxoglutarate = 3-phosphooxypyruvate + L-glutamate. The enzyme catalyses 4-(phosphooxy)-L-threonine + 2-oxoglutarate = (R)-3-hydroxy-2-oxo-4-phosphooxybutanoate + L-glutamate. It functions in the pathway amino-acid biosynthesis; L-serine biosynthesis; L-serine from 3-phospho-D-glycerate: step 2/3. Its pathway is cofactor biosynthesis; pyridoxine 5'-phosphate biosynthesis; pyridoxine 5'-phosphate from D-erythrose 4-phosphate: step 3/5. Catalyzes the reversible conversion of 3-phosphohydroxypyruvate to phosphoserine and of 3-hydroxy-2-oxo-4-phosphonooxybutanoate to phosphohydroxythreonine. The chain is Phosphoserine aminotransferase from Mannheimia succiniciproducens (strain KCTC 0769BP / MBEL55E).